The chain runs to 272 residues: Glutamate racemase (272 aa).

Residues 13-14 and 45-46 each bind substrate; these read DS and YG. Residue C76 is the Proton donor/acceptor of the active site. 77 to 78 is a binding site for substrate; that stretch reads NT. C186 acts as the Proton donor/acceptor in catalysis. Residue 187 to 188 participates in substrate binding; the sequence is TH.

It belongs to the aspartate/glutamate racemases family.

It carries out the reaction L-glutamate = D-glutamate. The protein operates within cell wall biogenesis; peptidoglycan biosynthesis. Its function is as follows. Provides the (R)-glutamate required for cell wall biosynthesis. This chain is Glutamate racemase, found in Cupriavidus pinatubonensis (strain JMP 134 / LMG 1197) (Cupriavidus necator (strain JMP 134)).